A 291-amino-acid polypeptide reads, in one-letter code: Pituitary-specific positive transcription factor 1 (291 aa).

Positions 5–13 (PFTSTDTFI) match the 9aaTAD motif. Residues 124 to 198 (MDSPEIRELE…ILFKWLEEAE (75 aa)) enclose the POU-specific domain. The homeobox DNA-binding region spans 214–273 (KRKRRTTISIAAKDALERHFGEQNKPSSQEILRMAEELNLEKEVVRVWFCNRRQREKRVK).

It belongs to the POU transcription factor family. Class-1 subfamily. As to quaternary structure, interacts with PITX1. Interacts with LHX3. Interacts with ELK1.

It is found in the nucleus. Its function is as follows. Transcription factor involved in the specification of the lactotrope, somatotrope, and thyrotrope phenotypes in the developing anterior pituitary. Activates growth hormone and prolactin genes. Specifically binds to the consensus sequence 5'-TAAAT-3'. The polypeptide is Pituitary-specific positive transcription factor 1 (POU1F1) (Ovis aries (Sheep)).